The chain runs to 71 residues: Protein CYSTEINE-RICH TRANSMEMBRANE MODULE 8 (71 aa).

The segment covering 1–22 (MNQSAQNYFSVQKPSETSSGPY) has biased composition (polar residues). A disordered region spans residues 1 to 35 (MNQSAQNYFSVQKPSETSSGPYTSPPPIGYPTRDA). A helical transmembrane segment spans residues 48 to 64 (NSKGVNPEGCCAAICCC).

It belongs to the CYSTM1 family. Mostly expressed in stems, siliques, roots and flowers and, to a lower extent, in leaves.

The protein localises to the membrane. It is found in the nucleus. Involved in resistance to abiotic stress. This chain is Protein CYSTEINE-RICH TRANSMEMBRANE MODULE 8, found in Arabidopsis thaliana (Mouse-ear cress).